Here is a 582-residue protein sequence, read N- to C-terminus: Aspartate--tRNA ligase (582 aa).

Glu-174 is a binding site for L-aspartate. The segment at 198 to 201 is aspartate; that stretch reads QITK. Arg-220 contributes to the L-aspartate binding site. Residues 220–222 and Gln-229 contribute to the ATP site; that span reads RDE. His-443 serves as a coordination point for L-aspartate. ATP is bound at residue Glu-477. Residue Arg-484 coordinates L-aspartate. 529 to 532 lines the ATP pocket; it reads GLDR.

Belongs to the class-II aminoacyl-tRNA synthetase family. Type 1 subfamily. In terms of assembly, homodimer.

The protein localises to the cytoplasm. The catalysed reaction is tRNA(Asp) + L-aspartate + ATP = L-aspartyl-tRNA(Asp) + AMP + diphosphate. Catalyzes the attachment of L-aspartate to tRNA(Asp) in a two-step reaction: L-aspartate is first activated by ATP to form Asp-AMP and then transferred to the acceptor end of tRNA(Asp). The sequence is that of Aspartate--tRNA ligase from Streptococcus pyogenes serotype M28 (strain MGAS6180).